We begin with the raw amino-acid sequence, 179 residues long: Large ribosomal subunit protein uL5 (179 aa).

The protein belongs to the universal ribosomal protein uL5 family. As to quaternary structure, part of the 50S ribosomal subunit; part of the 5S rRNA/L5/L18/L25 subcomplex. Contacts the 5S rRNA and the P site tRNA. Forms a bridge to the 30S subunit in the 70S ribosome.

In terms of biological role, this is one of the proteins that bind and probably mediate the attachment of the 5S RNA into the large ribosomal subunit, where it forms part of the central protuberance. In the 70S ribosome it contacts protein S13 of the 30S subunit (bridge B1b), connecting the 2 subunits; this bridge is implicated in subunit movement. Contacts the P site tRNA; the 5S rRNA and some of its associated proteins might help stabilize positioning of ribosome-bound tRNAs. This is Large ribosomal subunit protein uL5 from Prochlorococcus marinus (strain NATL2A).